A 199-amino-acid chain; its full sequence is NAD(P)H dehydrogenase (quinone) 1 (199 aa).

One can recognise a Flavodoxin-like domain in the interval 4-190 (VLVLYYSAYG…EAARFQGAHV (187 aa)). Residues 10-15 (SAYGHI) and 78-80 (TRY) contribute to the FMN site. Tyr12 provides a ligand contact to NAD(+). Residue Trp98 participates in substrate binding. FMN-binding positions include 113-119 (SSATQHG) and His134.

This sequence belongs to the WrbA family. Requires FMN as cofactor.

It carries out the reaction a quinone + NADH + H(+) = a quinol + NAD(+). The catalysed reaction is a quinone + NADPH + H(+) = a quinol + NADP(+). The polypeptide is NAD(P)H dehydrogenase (quinone) 1 (Rhizobium meliloti (strain 1021) (Ensifer meliloti)).